The primary structure comprises 326 residues: MASITDKDHQKVILVGDGAVGSSYAYAMVLQGIAQEIGIVDIFKDKTKGDAIDLSNALPFTSPKKIYSAEYSDAKDADLVVITAGAPQKPGETRLDLVNKNLKILKSIVDPIVDSGFNGIFLVAANPVDILTYATWKLSGFPKNRVVGSGTSLDTARFRQSIAEMVNVDARSVHAYIMGEHGDTEFPVWSHANIGGVTIAEWVKAHPEIKEDKLVKMFEDVRDAAYEIIKLKGATFYGIATALARISKAILNDENAVLPLSVYMDGQYGLNDIYIGTPAVINRNGIQNILEIPLTDHEEESMQKSASQLKKVLTDAFAKNDIETRQ.

Residues Val-20, Asp-41, Lys-46, Tyr-71, and 85–86 contribute to the NAD(+) site; that span reads GA. Gln-88 and Arg-94 together coordinate substrate. Residues Ser-107, 124–126, and Ser-149 contribute to the NAD(+) site; that span reads AAN. A substrate-binding site is contributed by 126-129; sequence NPVD. 154–157 serves as a coordination point for substrate; it reads DTAR. Beta-D-fructose 1,6-bisphosphate-binding positions include Arg-159, 171–174, and His-174; that span reads RSVH. His-181 (proton acceptor) is an active-site residue. A Phosphotyrosine modification is found at Tyr-226. Residue Thr-235 participates in substrate binding.

It belongs to the LDH/MDH superfamily. LDH family. In terms of assembly, homotetramer.

Its subcellular location is the cytoplasm. It catalyses the reaction (S)-lactate + NAD(+) = pyruvate + NADH + H(+). Its pathway is fermentation; pyruvate fermentation to lactate; (S)-lactate from pyruvate: step 1/1. Allosterically activated by fructose 1,6-bisphosphate (FBP) alone under acidic conditions, while it requires additional activation factors such as divalent cations (Mn(2+)) under neutral conditions. Under acidic conditions, Mn(2+) is an inhibitor in the absence of fructose 1,6-bisphosphate (FBP). In case of L.casei, L-LDH binds four fructose 1,6-bisphosphate (FBP) molecules per tetramer, while usual allosteric L-LDH binds only two fructose 1,6-bisphosphate (FBP) molecules per tetramer. Catalyzes the conversion of lactate to pyruvate. This is L-lactate dehydrogenase from Lacticaseibacillus casei (Lactobacillus casei).